Consider the following 183-residue polypeptide: Capsid protein (183 aa).

The tract at residues 136–183 (NAPILSTLPETTVVRRRGRSPRRRTPSPRRRRSQSPRRRRSQSRESQC) is disordered. Residues 149–176 (VRRRGRSPRRRTPSPRRRRSQSPRRRRS) are compositionally biased toward basic residues. Ser-155, Ser-162, and Ser-170 each carry phosphoserine; by host. One copy of the 1; half-length repeat lies at 155 to 161 (SPRRRTP). The segment at 155-177 (SPRRRTPSPRRRRSQSPRRRRSQ) is 3 X 8 AA repeats of S-P-R-R-R-[PR]-S-Q. Positions 158–175 (RRTPSPRRRRSQSPRRRR) match the Bipartite nuclear localization signal motif. 2 repeat units span residues 162–169 (SPRRRRSQ) and 170–177 (SPRRRRSQ). Residues 177–183 (QSRESQC) form an RNA binding region.

This sequence belongs to the orthohepadnavirus core antigen family. As to quaternary structure, homodimerizes, then multimerizes. Interacts with cytosol exposed regions of viral L glycoprotein present in the reticulum-to-Golgi compartment. Interacts with human FLNB. Phosphorylated form interacts with host importin alpha; this interaction depends on the exposure of the NLS, which itself depends upon genome maturation and/or phosphorylation of the capsid protein. Interacts with host NUP153. In terms of processing, phosphorylated by host SRPK1, SRPK2, and maybe protein kinase C or GAPDH. Phosphorylation is critical for pregenomic RNA packaging. Protein kinase C phosphorylation is stimulated by HBx protein and may play a role in transport of the viral genome to the nucleus at the late step during the viral replication cycle.

The protein localises to the virion. Its subcellular location is the host cytoplasm. Its function is as follows. Self assembles to form an icosahedral capsid. Most capsids appear to be large particles with an icosahedral symmetry of T=4 and consist of 240 copies of capsid protein, though a fraction forms smaller T=3 particles consisting of 180 capsid proteins. Entering capsids are transported along microtubules to the nucleus. Phosphorylation of the capsid is thought to induce exposure of nuclear localization signal in the C-terminal portion of the capsid protein that allows binding to the nuclear pore complex via the importin (karyopherin-) alpha and beta. Capsids are imported in intact form through the nuclear pore into the nuclear basket, where it probably binds NUP153. Only capsids that contain the mature viral genome can release the viral DNA and capsid protein into the nucleoplasm. Immature capsids get stuck in the basket. Capsids encapsulate the pre-genomic RNA and the P protein. Pre-genomic RNA is reverse-transcribed into DNA while the capsid is still in the cytoplasm. The capsid can then either be directed to the nucleus, providing more genomes for transcription, or bud through the endoplasmic reticulum to provide new virions. The polypeptide is Capsid protein (Homo sapiens (Human)).